We begin with the raw amino-acid sequence, 178 residues long: MATEYAIIAGGCFWCTEAVFKQIHGVVSVESGYIGGHTENPTYKQVCGGDTGHAEAIRIGFDPEKVSFGDLLDISFATHDPTQLNRQGNDIGTQYRSAIFPVSEEQLEEAKMAIARAQSEHNDAIVTTIEAHSTWYPAEDYHQDYWAGEGQGNRYCLAVIPPKLQKLHKRFAAYTAPE.

Residue Cys12 is part of the active site.

This sequence belongs to the MsrA Met sulfoxide reductase family.

It carries out the reaction L-methionyl-[protein] + [thioredoxin]-disulfide + H2O = L-methionyl-(S)-S-oxide-[protein] + [thioredoxin]-dithiol. It catalyses the reaction [thioredoxin]-disulfide + L-methionine + H2O = L-methionine (S)-S-oxide + [thioredoxin]-dithiol. Its function is as follows. Has an important function as a repair enzyme for proteins that have been inactivated by oxidation. Catalyzes the reversible oxidation-reduction of methionine sulfoxide in proteins to methionine. The chain is Peptide methionine sulfoxide reductase MsrA from Erwinia tasmaniensis (strain DSM 17950 / CFBP 7177 / CIP 109463 / NCPPB 4357 / Et1/99).